Consider the following 561-residue polypeptide: Mercuric reductase (561 aa).

In terms of domain architecture, HMA spans 1–65 (MTTLKITGMT…AVAGLGYEAT (65 aa)). A metal cation contacts are provided by cysteine 11 and cysteine 14. Positions 110, 130, and 135 each coordinate FAD. Residues cysteine 136 and cysteine 141 are joined by a disulfide bond. FAD contacts are provided by lysine 145, alanine 211, aspartate 403, and valine 411. Residues cysteine 558 and cysteine 559 each contribute to the Hg(2+) site.

The protein belongs to the class-I pyridine nucleotide-disulfide oxidoreductase family. Homodimer. FAD is required as a cofactor.

It catalyses the reaction Hg + NADP(+) + H(+) = Hg(2+) + NADPH. Its function is as follows. Resistance to Hg(2+) in bacteria appears to be governed by a specialized system which includes mercuric reductase. MerA protein is responsible for volatilizing mercury as Hg(0). The protein is Mercuric reductase (merA) of Enterobacter agglomerans (Erwinia herbicola).